Reading from the N-terminus, the 509-residue chain is Probable DNA ligase (509 aa).

Aspartate 218 provides a ligand contact to ATP. Residue lysine 220 is the N6-AMP-lysine intermediate of the active site. ATP-binding residues include arginine 225, arginine 240, glutamate 269, phenylalanine 302, arginine 374, and lysine 380.

This sequence belongs to the ATP-dependent DNA ligase family. Requires Mg(2+) as cofactor.

It catalyses the reaction ATP + (deoxyribonucleotide)n-3'-hydroxyl + 5'-phospho-(deoxyribonucleotide)m = (deoxyribonucleotide)n+m + AMP + diphosphate.. Its function is as follows. DNA ligase that seals nicks in double-stranded DNA during DNA replication, DNA recombination and DNA repair. This is Probable DNA ligase from Nocardioides sp. (strain ATCC BAA-499 / JS614).